The following is a 189-amino-acid chain: Potassium-transporting ATPase KdpC subunit (189 aa).

Residues 8–28 (LVMLILLTLITGIAYPLLTTG) traverse the membrane as a helical segment.

This sequence belongs to the KdpC family. In terms of assembly, the system is composed of three essential subunits: KdpA, KdpB and KdpC.

It localises to the cell inner membrane. Part of the high-affinity ATP-driven potassium transport (or Kdp) system, which catalyzes the hydrolysis of ATP coupled with the electrogenic transport of potassium into the cytoplasm. This subunit acts as a catalytic chaperone that increases the ATP-binding affinity of the ATP-hydrolyzing subunit KdpB by the formation of a transient KdpB/KdpC/ATP ternary complex. The sequence is that of Potassium-transporting ATPase KdpC subunit from Serratia proteamaculans (strain 568).